The chain runs to 134 residues: Insulin-like peptide 4 (134 aa).

The N-terminal stretch at 1 to 26 (MSLIRLGLALLLLLATVSQLLQPVQG) is a signal peptide. Cystine bridges form between Cys-31–Cys-120, Cys-43–Cys-133, and Cys-119–Cys-124. The propeptide at 54–108 (SSASKDARVRDLIRKLQQPDEDIEQETETGRLKQKHTDADTEKGVPPAVGSGRKL) is connecting peptide. The disordered stretch occupies residues 72-107 (PDEDIEQETETGRLKQKHTDADTEKGVPPAVGSGRK). Positions 81-96 (ETGRLKQKHTDADTEK) are enriched in basic and acidic residues.

Belongs to the insulin family. As to quaternary structure, heterodimer of a B chain and an A chain linked by two disulfide bonds. As to expression, expressed at a high level in the embryonic mesoderm, with expression continuing after gastrulation and reducing from stage 12 onwards. Highly expressed in the embryonic anterior midgut rudiment and larval midgut.

The protein localises to the secreted. Its function is as follows. Possible ligand of InR/insulin-like receptor. In Drosophila melanogaster (Fruit fly), this protein is Insulin-like peptide 4.